Consider the following 111-residue polypeptide: Probable 4-amino-4-deoxy-L-arabinose-phosphoundecaprenol flippase subunit ArnE (111 aa).

The next 3 helical transmembrane spans lie at 38–58, 61–81, and 91–111; these read LWLG…LLVL, LPVG…TLAA, and PRHW…GSAA. In terms of domain architecture, EamA spans 40–109; that stretch reads LGLALICMGA…IISGIIILGS (70 aa).

The protein belongs to the ArnE family. As to quaternary structure, heterodimer of ArnE and ArnF.

The protein resides in the cell inner membrane. It functions in the pathway bacterial outer membrane biogenesis; lipopolysaccharide biosynthesis. Its function is as follows. Translocates 4-amino-4-deoxy-L-arabinose-phosphoundecaprenol (alpha-L-Ara4N-phosphoundecaprenol) from the cytoplasmic to the periplasmic side of the inner membrane. The protein is Probable 4-amino-4-deoxy-L-arabinose-phosphoundecaprenol flippase subunit ArnE of Salmonella choleraesuis (strain SC-B67).